The following is a 240-amino-acid chain: Ubiquinone biosynthesis O-methyltransferase (240 aa).

S-adenosyl-L-methionine-binding residues include Arg44, Gly64, Asp85, and Met129.

The protein belongs to the methyltransferase superfamily. UbiG/COQ3 family.

It catalyses the reaction a 3-demethylubiquinol + S-adenosyl-L-methionine = a ubiquinol + S-adenosyl-L-homocysteine + H(+). The catalysed reaction is a 3-(all-trans-polyprenyl)benzene-1,2-diol + S-adenosyl-L-methionine = a 2-methoxy-6-(all-trans-polyprenyl)phenol + S-adenosyl-L-homocysteine + H(+). The protein operates within cofactor biosynthesis; ubiquinone biosynthesis. O-methyltransferase that catalyzes the 2 O-methylation steps in the ubiquinone biosynthetic pathway. This is Ubiquinone biosynthesis O-methyltransferase from Escherichia coli O127:H6 (strain E2348/69 / EPEC).